We begin with the raw amino-acid sequence, 269 residues long: Hydroxypyruvate/pyruvate aldolase (269 aa).

The Proton acceptor role is filled by histidine 48. A divalent metal cation contacts are provided by glutamate 152 and aspartate 178.

This sequence belongs to the HpcH/HpaI aldolase family. A divalent metal cation is required as a cofactor.

It catalyses the reaction D-glyceraldehyde + pyruvate = 2-dehydro-3-deoxy-L-galactonate. Aldolase which can catalyze in vitro the aldolisation reaction between hydroxypyruvate (HPA) or pyruvate (PA) and D-glyceraldehyde (D-GA). The condensation of pyruvate and D-glyceraldehyde produces 2-dehydro-3-deoxy-L-galactonate as the major product. Has weak activity with hydroxypyruvate and D-glyceraldehyde. The chain is Hydroxypyruvate/pyruvate aldolase from Delftia acidovorans (strain DSM 14801 / SPH-1).